Consider the following 360-residue polypeptide: SVP1-like protein 2 (360 aa).

WD repeat units follow at residues 12–50, 191–231, and 236–275; these read AHEPAVLNAAFNQDQTCFAVCHESGFQVYNTDPMELRMK, AHKS…LRFE, and LDRATVTSIKFSPDDSKLAVLSDKNTLHVYNLTAADPQPE.

The protein belongs to the WD repeat PROPPIN family.

The protein localises to the vacuole membrane. The protein resides in the cytoplasmic vesicle membrane. Its function is as follows. Involved in mitochondrial or peroxisomal functions and amino acid signaling pathways. The sequence is that of SVP1-like protein 2 (HSV2) from Pichia angusta (Yeast).